Here is a 434-residue protein sequence, read N- to C-terminus: tRNA modification GTPase MnmE (434 aa).

3 residues coordinate (6S)-5-formyl-5,6,7,8-tetrahydrofolate: Arg-20, Glu-79, and Val-119. Positions 219-361 (GLRVVLAGRP…LQEKLVEIGK (143 aa)) constitute a TrmE-type G domain. Residues 229–234 (NAGKST), 248–254 (APIAGTT), and 273–276 (DTAG) each bind GTP. Mg(2+) contacts are provided by Ser-233 and Thr-254. Lys-434 lines the (6S)-5-formyl-5,6,7,8-tetrahydrofolate pocket.

It belongs to the TRAFAC class TrmE-Era-EngA-EngB-Septin-like GTPase superfamily. TrmE GTPase family. Homodimer. Heterotetramer of two MnmE and two MnmG subunits. K(+) serves as cofactor.

It localises to the cytoplasm. Its function is as follows. Exhibits a very high intrinsic GTPase hydrolysis rate. Involved in the addition of a carboxymethylaminomethyl (cmnm) group at the wobble position (U34) of certain tRNAs, forming tRNA-cmnm(5)s(2)U34. The protein is tRNA modification GTPase MnmE of Zymomonas mobilis subsp. mobilis (strain ATCC 31821 / ZM4 / CP4).